The primary structure comprises 362 residues: Ferredoxin--NADP reductase, leaf isozyme 1, chloroplastic (362 aa).

The transit peptide at 1–62 directs the protein to the chloroplast; it reads MAAVTAAAVS…DAAAVAAAPA (62 aa). An FAD-binding FR-type domain is found at 83–205; the sequence is KEPYVGKCLL…TGPVGKEMLM (123 aa). FAD is bound by residues 141–144, 162–164, Tyr168, 179–181, and Thr220; these read RLYS, CVK, and VCS. Ser144 and Lys164 together coordinate NADP(+). Cys180 and Cys185 are oxidised to a cystine. Residue Ser181 is modified to Phosphoserine. NADP(+)-binding positions include Thr220, 252–253, 282–283, Lys292, 321–322, and Glu360; these read VP, SR, and GL.

The protein belongs to the ferredoxin--NADP reductase type 1 family. In terms of assembly, component of high molecular weight thylakoid LFNRs-containing protein complexes containing LIR1, LFNR1, LFNR2, TIC62 and TROL proteins. Interacts directly with LIR1 and TIC62; LIR1 increases the affinity of LFNR1 and LFNR2 for TIC62. FAD serves as cofactor. Post-translationally, may form interchain disulfide bonds with LIR1.

Its subcellular location is the plastid. The protein localises to the chloroplast stroma. It localises to the chloroplast thylakoid membrane. It catalyses the reaction 2 reduced [2Fe-2S]-[ferredoxin] + NADP(+) + H(+) = 2 oxidized [2Fe-2S]-[ferredoxin] + NADPH. Its pathway is energy metabolism; photosynthesis. May play a key role in regulating the relative amounts of cyclic and non-cyclic electron flow to meet the demands of the plant for ATP and reducing power. The chain is Ferredoxin--NADP reductase, leaf isozyme 1, chloroplastic from Oryza sativa subsp. japonica (Rice).